A 492-amino-acid chain; its full sequence is 2,3-bisphosphoglycerate-independent phosphoglycerate mutase (492 aa).

2 residues coordinate Mn(2+): aspartate 11 and serine 61. Serine 61 (phosphoserine intermediate) is an active-site residue. Substrate contacts are provided by residues histidine 118, 147–148 (RD), arginine 177, arginine 183, 248–251 (RNDR), and lysine 321. Mn(2+) contacts are provided by aspartate 387, histidine 391, aspartate 428, histidine 429, and histidine 446.

Belongs to the BPG-independent phosphoglycerate mutase family. Monomer. Mn(2+) is required as a cofactor.

It catalyses the reaction (2R)-2-phosphoglycerate = (2R)-3-phosphoglycerate. The protein operates within carbohydrate degradation; glycolysis; pyruvate from D-glyceraldehyde 3-phosphate: step 3/5. Catalyzes the interconversion of 2-phosphoglycerate and 3-phosphoglycerate. This Helicobacter acinonychis (strain Sheeba) protein is 2,3-bisphosphoglycerate-independent phosphoglycerate mutase.